The chain runs to 782 residues: Lysosome membrane protein 2-C (782 aa).

Residues 1 to 7 (MVANNKG) are Cytoplasmic-facing. A helical membrane pass occupies residues 8-28 (LLIAGLLLSVIGAALFVISLA). Residues 29–739 (LLPSVLNVAT…QQFKQIQTVK (711 aa)) lie on the Lumenal side of the membrane. N-linked (GlcNAc...) asparagine glycosylation is found at asparagine 77, asparagine 105, asparagine 191, asparagine 219, asparagine 234, asparagine 243, asparagine 281, asparagine 368, asparagine 387, asparagine 401, asparagine 427, asparagine 432, asparagine 451, asparagine 465, asparagine 501, asparagine 536, asparagine 540, asparagine 595, asparagine 605, asparagine 613, asparagine 646, and asparagine 692. The chain crosses the membrane as a helical span at residues 740–760 (IAPVVVVSIFGGILLIAGLVM). At 761–782 (AINGFRKTFYNNNQYNGYNIIN) the chain is on the cytoplasmic side. The Tyrosine-type lysosomal sorting signal motif lies at 777 to 781 (GYNII).

The protein belongs to the CD36 family. Post-translationally, heavily glycosylated.

Its subcellular location is the lysosome membrane. Its function is as follows. May act as a lysosomal receptor. May be involved role in macropinocytosis and fluid phase exocytosis. The polypeptide is Lysosome membrane protein 2-C (lmpC) (Dictyostelium discoideum (Social amoeba)).